The sequence spans 343 residues: Small ribosomal subunit biogenesis GTPase RsgA (343 aa).

The CP-type G domain maps to 116 to 275 (RGQLKPVAAN…LIDSPGIREF (160 aa)). GTP is bound by residues 163–166 (NKFD) and 217–225 (GQSGVGKSS). Zn(2+)-binding residues include Cys299, Cys304, His306, and Cys312.

It belongs to the TRAFAC class YlqF/YawG GTPase family. RsgA subfamily. Monomer. Associates with 30S ribosomal subunit, binds 16S rRNA. Requires Zn(2+) as cofactor.

The protein resides in the cytoplasm. One of several proteins that assist in the late maturation steps of the functional core of the 30S ribosomal subunit. Helps release RbfA from mature subunits. May play a role in the assembly of ribosomal proteins into the subunit. Circularly permuted GTPase that catalyzes slow GTP hydrolysis, GTPase activity is stimulated by the 30S ribosomal subunit. In Pseudomonas fluorescens (strain SBW25), this protein is Small ribosomal subunit biogenesis GTPase RsgA.